The chain runs to 2035 residues: Ral GTPase-activating protein subunit alpha-1 (2035 aa).

Disordered stretches follow at residues 343-384 (LVSR…SSLC) and 477-496 (DGEK…VRNS). Residues 345-365 (SREESKNDTVDKVDKSAEPEQ) are compositionally biased toward basic and acidic residues. Polar residues-rich tracts occupy residues 366-384 (SHSN…SSLC) and 486-496 (GTSTSEHVRNS). 2 positions are modified to phosphoserine: Ser710 and Ser720. Residues 714–752 (SFSRGWSRDQPGQAPMRQRSATTTGSPGTEKARSIVRQK) are disordered. Thr753 carries the phosphothreonine modification. Ser772 carries the phosphoserine modification. Position 777 is a phosphothreonine (Thr777). Phosphoserine is present on Ser796. The segment covering 807-817 (ERAKVNKEDTS) has biased composition (basic and acidic residues). Disordered stretches follow at residues 807-834 (ERAK…SANV) and 848-911 (SGNA…SHSD). Polar residues-rich tracts occupy residues 824–833 (NSETGGNSAN) and 849–862 (GNAS…SSPG). A phosphoserine mark is found at Ser859, Ser860, and Ser863. Over residues 894–911 (SPASAGSSDLMSSDSHSD) the composition is skewed to low complexity. Ser985, Ser989, Ser993, and Ser999 each carry phosphoserine. The span at 986–1008 (ESASPVHSALGSRSQTPSPSTLS) shows a compositional bias: polar residues. The tract at residues 986–1011 (ESASPVHSALGSRSQTPSPSTLSRAH) is disordered. Residue Thr1001 is modified to Phosphothreonine. Phosphoserine is present on residues Ser1003 and Ser1477. The interval 1326–2035 (FTNKTVAHVA…YHHFPADADH (710 aa)) is minimal domain that binds to TCF3/E12. A coiled-coil region spans residues 1713–1748 (SEKQENDVINAILKQYTEEKEFVEKHFNDLNMKASE). Positions 1795–2003 (LRNLDSRQCR…EERARYLQTI (209 aa)) constitute a Rap-GAP domain.

Component of the heterodimeric RalGAP1 complex with RALGAPB. Heterodimerization is required for activity. Interacts with the HLH region of TCF3/isoform E12. In terms of tissue distribution, expressed during embryogenesis. Expressed in the adult brain, particularly in neurons of the cortex and hippocampus.

It localises to the cytoplasm. The protein resides in the nucleus. In terms of biological role, catalytic subunit of the heterodimeric RalGAP1 complex which acts as a GTPase activator for the Ras-like small GTPases RALA and RALB. May interact with the HLH region of TCF3/isoform E12. The polypeptide is Ral GTPase-activating protein subunit alpha-1 (Ralgapa1) (Mus musculus (Mouse)).